The following is a 770-amino-acid chain: Pheromone-regulated membrane protein 10 (770 aa).

Disordered regions lie at residues Met-1–Asp-125 and Asn-139–Glu-169. 2 stretches are compositionally biased toward polar residues: residues Ser-49–Asn-63 and Asp-78–Thr-93. A compositionally biased stretch (basic and acidic residues) spans Glu-155 to Glu-169. 10 helical membrane-spanning segments follow: residues Trp-453–Gly-473, Trp-475–Leu-495, Val-505–Pro-525, Ile-529–Leu-549, Phe-568–Phe-588, Leu-604–Leu-624, Ile-629–Ala-649, Phe-659–Trp-679, Gly-681–Ser-701, and Ile-740–Phe-760.

This sequence belongs to the ThrE exporter (TC 2.A.79) family.

The protein localises to the membrane. The protein is Pheromone-regulated membrane protein 10 (PRM10) of Saccharomyces cerevisiae (strain YJM789) (Baker's yeast).